The following is a 117-amino-acid chain: Urease subunit beta (117 aa).

A disordered region spans residues 95–117; sequence NAVNGKLDGGPHPGVPATERGAK.

The protein belongs to the urease beta subunit family. In terms of assembly, heterotrimer of UreA (gamma), UreB (beta) and UreC (alpha) subunits. Three heterotrimers associate to form the active enzyme.

The protein localises to the cytoplasm. The catalysed reaction is urea + 2 H2O + H(+) = hydrogencarbonate + 2 NH4(+). Its pathway is nitrogen metabolism; urea degradation; CO(2) and NH(3) from urea (urease route): step 1/1. This chain is Urease subunit beta, found in Pseudarthrobacter chlorophenolicus (strain ATCC 700700 / DSM 12829 / CIP 107037 / JCM 12360 / KCTC 9906 / NCIMB 13794 / A6) (Arthrobacter chlorophenolicus).